The primary structure comprises 545 residues: Chaperonin GroEL 2 (545 aa).

Residues Thr29–Pro32, Asp86–Thr90, Gly413, Asn479–Ala481, and Asp495 each bind ATP.

It belongs to the chaperonin (HSP60) family. In terms of assembly, forms a cylinder of 14 subunits composed of two heptameric rings stacked back-to-back. Interacts with the co-chaperonin GroES.

Its subcellular location is the cytoplasm. It carries out the reaction ATP + H2O + a folded polypeptide = ADP + phosphate + an unfolded polypeptide.. Together with its co-chaperonin GroES, plays an essential role in assisting protein folding. The GroEL-GroES system forms a nano-cage that allows encapsulation of the non-native substrate proteins and provides a physical environment optimized to promote and accelerate protein folding. The chain is Chaperonin GroEL 2 from Prochlorococcus marinus (strain SARG / CCMP1375 / SS120).